The chain runs to 260 residues: Acidic leucine-rich nuclear phosphoprotein 32 family member E (260 aa).

M1 carries the N-acetylmethionine modification. LRR repeat units follow at residues 18–38, 43–64, 65–87, and 89–110; these read EVTELVLDNCLCVNGEIEGLN, ELEFLSMANVELSSLARLPSLN, KLRKLELSDNIISGGLEVLAEKC, and NLTYLNLSGNKIKDLSTVEALQ. Residue K68 forms a Glycyl lysine isopeptide (Lys-Gly) (interchain with G-Cter in SUMO2) linkage. The region spanning 123–161 is the LRRCT domain; that stretch reads CEITNLEDYRESIFELLQQITYLDGFDQEDNEAPDSEEE. Acidic residues-rich tracts occupy residues 149–208 and 218–240; these read DQED…EEEV and IQDEEDDDDYVDEGEEEEEEEEE. The interval 149 to 260 is disordered; that stretch reads DQEDNEAPDS…AEDDGEEDDD (112 aa). The tract at residues 207–260 is ZID domain; that stretch reads EVGLSYLMKDEIQDEEDDDDYVDEGEEEEEEEEEGLRGEKRKRDAEDDGEEDDD. Residues 241 to 251 are compositionally biased toward basic and acidic residues; sequence GLRGEKRKRDA.

Belongs to the ANP32 family. As to quaternary structure, component of a SWR1-like complex, composed of EP400, KAT5/TIP60, TRRAP, BRD8, RUVBL1, RUVBL2, ING3 and ANP32E; the complex does not contain SRCAP. Interacts with H2A.Z/H2AZ1. Interacts with the importin alpha KPNA1 and KPNA2. Post-translationally, phosphorylated. The phosphorylation is nuclear localization signal (NLS)-dependent. As to expression, expressed at highest levels in cerebellum and spleen. In the cerebellum, expressed mainly in granule cells and, to a lesser extent, in Purkinje cells.

The protein localises to the cytoplasm. Its subcellular location is the nucleus. Its function is as follows. Histone chaperone that specifically mediates the genome-wide removal of histone H2A.Z/H2AZ1 from the nucleosome: removes H2A.Z/H2AZ1 from its normal sites of deposition, especially from enhancer and insulator regions. Not involved in deposition of H2A.Z/H2AZ1 in the nucleosome. May stabilize the evicted H2A.Z/H2AZ1-H2B dimer, thus shifting the equilibrium towards dissociation and the off-chromatin state. Inhibits activity of protein phosphatase 2A (PP2A). Does not inhibit protein phosphatase 1. May play a role in cerebellar development and synaptogenesis. This chain is Acidic leucine-rich nuclear phosphoprotein 32 family member E (Anp32e), found in Mus musculus (Mouse).